The following is a 132-amino-acid chain: Small ribosomal subunit protein uS11 (132 aa).

It belongs to the universal ribosomal protein uS11 family. As to quaternary structure, part of the 30S ribosomal subunit. Interacts with proteins S7 and S18. Binds to IF-3.

Functionally, located on the platform of the 30S subunit, it bridges several disparate RNA helices of the 16S rRNA. Forms part of the Shine-Dalgarno cleft in the 70S ribosome. The sequence is that of Small ribosomal subunit protein uS11 from Dichelobacter nodosus (strain VCS1703A).